We begin with the raw amino-acid sequence, 389 residues long: BTB/POZ domain-containing protein KCTD9 (389 aa).

The 80-residue stretch at 3 to 82 folds into the KHA domain; sequence RVTLFLNGSP…PQTDSKPPEG (80 aa). Position 11 is a phosphoserine (serine 11). The BTB domain maps to 89–161; it reads DWLTLNVGGR…LRHGQLIVND (73 aa). Pentapeptide repeat domains are found at residues 224-256, 258-297, and 338-376; these read NFSG…ANLC, ANLE…NFED, and CNLR…AIFE.

Forms pentamers. Component of a complex composed of 5 subunits of KCTD9 and 5 CUL3.

Its pathway is protein modification; protein ubiquitination. Substrate-specific adapter of a BCR (BTB-CUL3-RBX1) E3 ubiquitin-protein ligase complex, which mediates the ubiquitination of target proteins, leading to their degradation by the proteasome. The chain is BTB/POZ domain-containing protein KCTD9 (KCTD9) from Homo sapiens (Human).